The primary structure comprises 664 residues: L-type lectin-domain containing receptor kinase I.3 (664 aa).

An N-terminal signal peptide occupies residues M1 to S21. Residues Q22–P286 are Extracellular-facing. The segment at E24–S257 is legume-lectin like. 7 N-linked (GlcNAc...) asparagine glycosylation sites follow: N55, N125, N128, N181, N204, N225, and N267. The chain crosses the membrane as a helical span at residues L287–Y307. At W308–R664 the chain is on the cytoplasmic side. Residues F342–F619 form the Protein kinase domain. ATP contacts are provided by residues V348 to V356 and K370. Residue D466 is the Proton acceptor of the active site.

This sequence in the C-terminal section; belongs to the protein kinase superfamily. Ser/Thr protein kinase family. The protein in the N-terminal section; belongs to the leguminous lectin family. In terms of processing, autophosphorylated on Ser and Thr residues. As to expression, mostly expressed in roots and flowers, and, to a lower extent, in leaves.

It localises to the cell membrane. The catalysed reaction is L-seryl-[protein] + ATP = O-phospho-L-seryl-[protein] + ADP + H(+). It catalyses the reaction L-threonyl-[protein] + ATP = O-phospho-L-threonyl-[protein] + ADP + H(+). In terms of biological role, involved in resistance response to the pathogenic fungus Alternaria brassicicola. This Arabidopsis thaliana (Mouse-ear cress) protein is L-type lectin-domain containing receptor kinase I.3.